The sequence spans 1006 residues: Unconventional myosin-Id (1006 aa).

Residue A2 is modified to N-acetylalanine. The Myosin motor domain occupies 9-695; it reads FGKADFVLMD…TLFTLEELRA (687 aa). 102 to 109 provides a ligand contact to ATP; it reads GESGAGKT. S200 is subject to Phosphoserine. Phosphotyrosine is present on Y536. An actin-binding region spans residues 572 to 594; that stretch reads MIALVDNLASKEPYYVRCIKPND. 2 consecutive IQ domains span residues 699-719 and 721-741; these read IRIV…MRYK and TKAA…SYIH. Residues 812–1005 form the TH1 domain; that stretch reads GQRADLGLQR…RSGFILSVPG (194 aa).

Belongs to the TRAFAC class myosin-kinesin ATPase superfamily. Myosin family. In terms of assembly, interacts (via the two IQ motifs) with calmodulin. Binds an additional calmodulin chain via a third, C-terminal region. Interacts with F-actin. In terms of tissue distribution, expressed in many tissues. Highest levels in brain, followed by lung and ovary; expression is lowest in spleen.

The protein localises to the cytoplasm. It localises to the perikaryon. The protein resides in the cell projection. Its subcellular location is the dendrite. It is found in the early endosome. The protein localises to the cell cortex. Unconventional myosin that functions as actin-based motor protein with ATPase activity. Plays a role in endosomal protein trafficking, and especially in the transfer of cargo proteins from early to recycling endosomes. Required for normal planar cell polarity in ciliated tracheal cells, for normal rotational polarity of cilia, and for coordinated, unidirectional ciliary movement in the trachea. Required for normal, polarized cilia organization in brain ependymal epithelial cells. This chain is Unconventional myosin-Id (MYO1D), found in Homo sapiens (Human).